The sequence spans 285 residues: Probable endonuclease 4 (285 aa).

9 residues coordinate Zn(2+): His-69, His-109, Glu-145, Asp-179, His-182, His-216, Asp-229, His-231, and Glu-261.

Belongs to the AP endonuclease 2 family. The cofactor is Zn(2+).

It catalyses the reaction Endonucleolytic cleavage to 5'-phosphooligonucleotide end-products.. In terms of biological role, endonuclease IV plays a role in DNA repair. It cleaves phosphodiester bonds at apurinic or apyrimidinic (AP) sites, generating a 3'-hydroxyl group and a 5'-terminal sugar phosphate. This Escherichia fergusonii (strain ATCC 35469 / DSM 13698 / CCUG 18766 / IAM 14443 / JCM 21226 / LMG 7866 / NBRC 102419 / NCTC 12128 / CDC 0568-73) protein is Probable endonuclease 4.